Reading from the N-terminus, the 117-residue chain is Large ribosomal subunit protein bL20c (117 aa).

Belongs to the bacterial ribosomal protein bL20 family.

It localises to the plastid. Its subcellular location is the chloroplast. Functionally, binds directly to 23S ribosomal RNA and is necessary for the in vitro assembly process of the 50S ribosomal subunit. It is not involved in the protein synthesizing functions of that subunit. The protein is Large ribosomal subunit protein bL20c of Morus indica (Mulberry).